The following is a 172-amino-acid chain: Protein GrpE (172 aa).

Residues 1–23 are disordered; the sequence is MNQDHPEFDSEDLSQNPPETDPL.

This sequence belongs to the GrpE family. Homodimer.

The protein localises to the cytoplasm. Participates actively in the response to hyperosmotic and heat shock by preventing the aggregation of stress-denatured proteins, in association with DnaK and GrpE. It is the nucleotide exchange factor for DnaK and may function as a thermosensor. Unfolded proteins bind initially to DnaJ; upon interaction with the DnaJ-bound protein, DnaK hydrolyzes its bound ATP, resulting in the formation of a stable complex. GrpE releases ADP from DnaK; ATP binding to DnaK triggers the release of the substrate protein, thus completing the reaction cycle. Several rounds of ATP-dependent interactions between DnaJ, DnaK and GrpE are required for fully efficient folding. The chain is Protein GrpE from Xanthomonas axonopodis pv. citri (strain 306).